We begin with the raw amino-acid sequence, 784 residues long: Toll-like receptor 2 (784 aa).

The N-terminal stretch at 1-20 is a signal peptide; it reads MPRALWTAWVWAVIILSMEG. The Extracellular segment spans residues 21-587; the sequence is ASHQASSLSC…ARLSLSECHR (567 aa). C30 and C36 are joined by a disulfide. LRR repeat units lie at residues 54 to 77, 78 to 101, 102 to 125, 126 to 150, 151 to 175, 176 to 199, 200 to 223, 224 to 250, 251 to 278, 279 to 308, 309 to 337, 338 to 361, 362 to 388, 389 to 414, 415 to 437, 438 to 457, 458 to 478, 479 to 500, and 501 to 524; these read VKSLDLSNNEITYVSNRDLQRCVN, LKTLRLGANEIHTVEEDSFFHLRN, LEYLDLSYNRLSNLSSSWFRSLYA, LKFLNLLGNVYKTLGETSLFSHLPN, LRTLKVGNSNSFTEIHEKDFTGLIF, LEELEISAQNLQIYVPKSLKSIQN, ISHLILHLKQPVLLVDILVDIVSS, LDCLELRDTNLHTFHFSEASISEMNTS, VKKLIFRNVQFTDESFVEVVKLFNYVSG, ILEVEFDDCTHDGIGDFRALSLDRIRHLGN, VETLTIRKLHIPQFFLFHDLSSIYPLTGK, VKRVTIESSKVFLVPCLLSQHLKS, LEYLDLSENLMSEETLKNSACKDAWPF, LQTLVLRQNRLKSLEKTGELLLTLEN, LNNLDISKNNFLSMPETCRWPGK, MKQLNLSSTRVHSLTQCLPQ, TLEILDVSNNNLDSFSLILPQ, LKELYISRNKLKTLPDASFLPV, and LSVMRISRNIINTFSKEQLDSFQQ. The N-linked (GlcNAc...) asparagine glycan is linked to N114. Residue N199 is glycosylated (N-linked (GlcNAc...) asparagine). The N-linked (GlcNAc...) asparagine glycan is linked to N248. Cysteines 353 and 382 form a disulfide. A disulfide bridge links C432 with C454. N442 is a glycosylation site (N-linked (GlcNAc...) asparagine). One can recognise an LRRCT domain in the interval 525–579; it reads LKTLEAGGNNFICSCDFLSFTQGQQALGRVLVDWPAEYRCDSPSHVRGQRVQDAR. A helical transmembrane segment spans residues 588–608; the sequence is AAVVSAACCALFLLLLLTGVL. The Cytoplasmic portion of the chain corresponds to 609–784; the sequence is CHRFHGLWYM…WLNLRAAIRS (176 aa). The region spanning 639 to 782 is the TIR domain; the sequence is ICYDAFVSYS…GFWLNLRAAI (144 aa). Residue K754 forms a Glycyl lysine isopeptide (Lys-Gly) (interchain with G-Cter in ubiquitin) linkage. The ATG16L1-binding motif signature appears at 761–778; the sequence is YLEWPVDETQQEGFWLNL.

It belongs to the Toll-like receptor family. Interacts with LY96, TLR1 and TLR6 (via extracellular domain). TLR2 seems to exist in heterodimers with either TLR1 or TLR6 before stimulation by the ligand. The heterodimers form bigger oligomers in response to their corresponding ligands as well as further heterotypic associations with other receptors such as CD14 and/or CD36. Binds MYD88 (via TIR domain). Interacts with TICAM1. Interacts with CNPY3. Interacts with ATG16L1. Interacts with PPP1R11. Interacts with TICAM2. Interacts with TIRAP. Post-translationally, ubiquitinated at Lys-754 by PPP1R11, leading to its degradation. Deubiquitinated by USP2. Glycosylation of Asn-442 is critical for secretion of the N-terminal ectodomain of TLR2.

It is found in the membrane. The protein localises to the cytoplasmic vesicle. It localises to the phagosome membrane. The protein resides in the membrane raft. Functionally, cooperates with LY96 to mediate the innate immune response to bacterial lipoproteins and other microbial cell wall components. Cooperates with TLR1 or TLR6 to mediate the innate immune response to bacterial lipoproteins or lipopeptides. Acts via MYD88 and TRAF6, leading to NF-kappa-B activation, cytokine secretion and the inflammatory response. May also promote apoptosis in response to lipoproteins. Forms activation clusters composed of several receptors depending on the ligand, these clusters trigger signaling from the cell surface and subsequently are targeted to the Golgi in a lipid-raft dependent pathway. Forms the cluster TLR2:TLR6:CD14:CD36 in response to diacylated lipopeptides and TLR2:TLR1:CD14 in response to triacylated lipopeptides. This Bubalus bubalis (Domestic water buffalo) protein is Toll-like receptor 2 (TLR2).